The sequence spans 338 residues: Acyl-CoA:acyl-CoA alkyltransferase (338 aa).

Mn(2+) contacts are provided by His-18 and Asp-56. Glu-97 (proton acceptor) is an active-site residue. The active-site Acyl-thioester intermediate is the Cys-123.

This sequence belongs to the thiolase-like superfamily. OleA family. Homodimer. Weakly associates with the OleBCD complex.

The protein resides in the cytoplasm. It carries out the reaction a 1,2-saturated acyl-CoA + an acyl-CoA + H2O = an (R)-2-alkyl-3-oxoalkanoate + 2 CoA + H(+). With respect to regulation, inhibited by cerulenin. In terms of biological role, involved in olefin biosynthesis. Catalyzes a non-decarboxylative head-to-head Claisen condensation of two acyl-CoA molecules, generating an (R)-2-alkyl-3-oxoalkanoate. Is active with fatty acyl-CoA substrates that ranged from C(8) to C(16) in length, and is the most active with palmitoyl-CoA and myristoyl-CoA. This Xanthomonas campestris pv. campestris (strain ATCC 33913 / DSM 3586 / NCPPB 528 / LMG 568 / P 25) protein is Acyl-CoA:acyl-CoA alkyltransferase.